The primary structure comprises 74 residues: UPF0435 protein GK0418 (74 aa).

It belongs to the UPF0435 family.

The sequence is that of UPF0435 protein GK0418 from Geobacillus kaustophilus (strain HTA426).